The primary structure comprises 137 residues: ER-derived vesicles protein erv14 (137 aa).

The Cytoplasmic segment spans residues 1-9 (MMSFGSFVY). The helical transmembrane segment at 10–30 (IACLLLNGANMLLQIFCVIMF) threads the bilayer. Over 31–62 (SDLEMDYINPIDLCNKLNDLVMPEIISHTLVT) the chain is Extracellular. A helical membrane pass occupies residues 63-83 (LLLLLGKKWLLFLANLPLLVF). Residues 84 to 114 (HANQVIHKTHILDATEIFRQLGRHKRDNFIK) are Cytoplasmic-facing. A helical membrane pass occupies residues 115–135 (VTFYLIMFFTLLYCMVMSLIQ). The Extracellular segment spans residues 136–137 (EE).

It belongs to the cornichon family.

Its subcellular location is the endoplasmic reticulum. The protein localises to the membrane. The protein resides in the golgi apparatus membrane. Regulates export of the secretory proteins from the endoplasmic reticulum in COPII-coated vesicles. This Schizosaccharomyces pombe (strain 972 / ATCC 24843) (Fission yeast) protein is ER-derived vesicles protein erv14 (erv14).